Here is a 405-residue protein sequence, read N- to C-terminus: Tryptophan synthase beta chain (405 aa).

At Lys98 the chain carries N6-(pyridoxal phosphate)lysine.

Belongs to the TrpB family. As to quaternary structure, tetramer of two alpha and two beta chains. Requires pyridoxal 5'-phosphate as cofactor.

The catalysed reaction is (1S,2R)-1-C-(indol-3-yl)glycerol 3-phosphate + L-serine = D-glyceraldehyde 3-phosphate + L-tryptophan + H2O. The protein operates within amino-acid biosynthesis; L-tryptophan biosynthesis; L-tryptophan from chorismate: step 5/5. The beta subunit is responsible for the synthesis of L-tryptophan from indole and L-serine. This chain is Tryptophan synthase beta chain, found in Bradyrhizobium diazoefficiens (strain JCM 10833 / BCRC 13528 / IAM 13628 / NBRC 14792 / USDA 110).